We begin with the raw amino-acid sequence, 418 residues long: 3-isopropylmalate dehydratase large subunit (418 aa).

Residues cysteine 299, cysteine 359, and cysteine 362 each contribute to the [4Fe-4S] cluster site.

Belongs to the aconitase/IPM isomerase family. LeuC type 2 subfamily. In terms of assembly, heterodimer of LeuC and LeuD. [4Fe-4S] cluster is required as a cofactor.

It carries out the reaction (2R,3S)-3-isopropylmalate = (2S)-2-isopropylmalate. It participates in amino-acid biosynthesis; L-leucine biosynthesis; L-leucine from 3-methyl-2-oxobutanoate: step 2/4. In terms of biological role, catalyzes the isomerization between 2-isopropylmalate and 3-isopropylmalate, via the formation of 2-isopropylmaleate. This is 3-isopropylmalate dehydratase large subunit from Oleidesulfovibrio alaskensis (strain ATCC BAA-1058 / DSM 17464 / G20) (Desulfovibrio alaskensis).